A 263-amino-acid chain; its full sequence is MSQADLLDQDPVFQLKGSMLAVTILELAHNDLARLERQLADKVAQAPNFFRDTPLVMALDKLPEGEGRLDLPALLEVCRRHGLRTLAIRAGREEDIAAAQALDLPVLPPSGARERPLDIKDSAPRKPAEEPSPSAGEARPEPAKAEEKPADPVSRPTKVVKTPVRGGMQIYAAGGDLIVLAAVSPGAELLADGNIHVYGPMRGRALAGVKGDATARIFCQQLAAELVSIAGNYKVAEDLRRSPQWGKAVHVSLSGDVLNITRL.

The tract at residues 107-159 is disordered; it reads LPPSGARERPLDIKDSAPRKPAEEPSPSAGEARPEPAKAEEKPADPVSRPTKV. 2 stretches are compositionally biased toward basic and acidic residues: residues 112–129 and 138–150; these read ARER…KPAE and ARPE…EKPA.

It belongs to the MinC family. In terms of assembly, interacts with MinD and FtsZ.

Cell division inhibitor that blocks the formation of polar Z ring septums. Rapidly oscillates between the poles of the cell to destabilize FtsZ filaments that have formed before they mature into polar Z rings. Prevents FtsZ polymerization. This is Probable septum site-determining protein MinC from Pseudomonas aeruginosa (strain UCBPP-PA14).